Consider the following 1003-residue polypeptide: UPF0182 protein Mkms_1433 (1003 aa).

Helical transmembrane passes span Val18–Asp38, Val63–Leu83, Leu114–Tyr134, Phe176–Ile196, Ile211–Asp231, Lys260–Leu280, and Ile288–Val308. The segment covering Ala902 to Ala937 has biased composition (low complexity). Positions Ala902–Ser979 are disordered.

This sequence belongs to the UPF0182 family.

It is found in the cell membrane. The protein is UPF0182 protein Mkms_1433 of Mycobacterium sp. (strain KMS).